Reading from the N-terminus, the 1137-residue chain is Phytochrome C (1137 aa).

The segment covering Met1–Ala18 has biased composition (low complexity). A disordered region spans residues Met1 to Val27. The 184-residue stretch at Asn217–Val400 folds into the GAF domain. Cys322 is a binding site for phytochromobilin. PAS domains follow at residues Val620–Ile690 and Ile750–Ser824. Positions Tyr904–Gln1124 constitute a Histidine kinase domain.

This sequence belongs to the phytochrome family. In terms of assembly, homodimer. In terms of processing, contains one covalently linked phytochromobilin chromophore.

Its function is as follows. Regulatory photoreceptor which exists in two forms that are reversibly interconvertible by light: the Pr form that absorbs maximally in the red region of the spectrum and the Pfr form that absorbs maximally in the far-red region. Photoconversion of Pr to Pfr induces an array of morphogenic responses, whereas reconversion of Pfr to Pr cancels the induction of those responses. Pfr controls the expression of a number of nuclear genes including those encoding the small subunit of ribulose-bisphosphate carboxylase, chlorophyll A/B binding protein, protochlorophyllide reductase, rRNA, etc. It also controls the expression of its own gene(s) in a negative feedback fashion. This is Phytochrome C (PHYC) from Oryza sativa subsp. indica (Rice).